The primary structure comprises 442 residues: NAD kinase 2, mitochondrial (442 aa).

The transit peptide at 1–62 directs the protein to the mitochondrion; that stretch reads MTCYRGFLLG…RELAGCGSRA (62 aa). Positions 24 to 36 are enriched in low complexity; sequence RGPGAGGPAARPR. The segment at 24–60 is disordered; that stretch reads RGPGAGGPAARPRLGGDGGGRRHLGQGQPRELAGCGS. Lys76 is subject to N6-acetyllysine; alternate. Position 76 is an N6-succinyllysine; alternate (Lys76). At Ser188 the chain carries Phosphoserine. Lys302 carries the post-translational modification N6-succinyllysine. Lys317 is modified (N6-acetyllysine; alternate). An N6-succinyllysine; alternate modification is found at Lys317. Ser367 bears the Phosphoserine mark. Lys397 bears the N6-acetyllysine mark.

This sequence belongs to the NAD kinase family. Homodimer. Widely expressed.

Its subcellular location is the mitochondrion. The catalysed reaction is NAD(+) + ATP = ADP + NADP(+) + H(+). Inhibited by NADH, NADPH and NADP(+). In terms of biological role, mitochondrial NAD(+) kinase that phosphorylates NAD(+) to yield NADP(+). Can use both ATP or inorganic polyphosphate as the phosphoryl donor. Also has weak NADH kinase activity in vitro; however NADH kinase activity is much weaker than the NAD(+) kinase activity and may not be relevant in vivo. This Homo sapiens (Human) protein is NAD kinase 2, mitochondrial (NADK2).